Here is a 40-residue protein sequence, read N- to C-terminus: MFKLLTLFKRNKITSAEEYYTQAIHICEQFDRSTQKYTSM.

This chain is Putative gene 55 protein (55), found in Bacillus phage SP01 (Bacteriophage SP01).